The chain runs to 3032 residues: Compactin nonaketide synthase, polyketide synthase component (3032 aa).

Residues 8–447 (NEPIVVVGSG…GTNAHAIIEE (440 aa)) enclose the Ketosynthase family 3 (KS3) domain. Catalysis depends on for beta-ketoacyl synthase activity residues Cys-181, His-320, and His-367. Residues 560 to 901 (VFTGQGAQWP…GYIWERFGVR (342 aa)) form an acyl and malonyl transferase region. Ser-654 serves as the catalytic For malonyltransferase activity. An N-terminal hotdog fold region spans residues 953–1089 (HLLLGKLSSY…GQIVITLGEA (137 aa)). Positions 953–1261 (HLLLGKLSSY…FKPFSPPTAS (309 aa)) constitute a PKS/mFAS DH domain. His-985 acts as the Proton acceptor; for dehydratase activity in catalysis. Residues 985 to 997 (HALQGQTVFPAAG) form a dehydratase-like region. The interval 1106–1261 (MNNVNIDFFY…FKPFSPPTAS (156 aa)) is C-terminal hotdog fold. Asp-1168 (proton donor; for dehydratase activity) is an active-site residue. The interval 1506-1544 (YDLIIASDVLHASSNFEEKLAHIRSLLKPGGHLVTFGVT) is methyltransferase. One can recognise a Carrier domain in the interval 2441 to 2520 (DQVRQIVIDG…DLADDAATRL (80 aa)). Ser-2480 bears the O-(pantetheine 4'-phosphoryl)serine mark. Positions 2531 to 2580 (IGDSTGTSDSGASPTPTDSHDEASSATSTDASSAEEDEEQEDDNEQGGRK) are disordered. Residues 2532-2547 (GDSTGTSDSGASPTPT) show a composition bias toward low complexity. The span at 2563-2575 (SAEEDEEQEDDNE) shows a compositional bias: acidic residues. The segment at 2586 to 2946 (RLSLGQEYSW…PKTQTHAPLF (361 aa)) is peptide synthetase elongation.

Pantetheine 4'-phosphate serves as cofactor.

The enzyme catalyses holo-[compactin nonaketide synthase] + 9 malonyl-CoA + 11 NADPH + 20 H(+) = dihydro-ML-236C-[compactin nonaketide synthase] + 9 CO2 + 11 NADP(+) + 9 CoA + 6 H2O. The protein operates within polyketide biosynthesis. Its function is as follows. Nonaketide synthase; part of the gene cluster that mediates the biosynthesis of compactin, also known as mevastatin or ML-236B, and which acts as a potent competitive inhibitor of HMG-CoA reductase. Compactin biosynthesis is performed in two stages. The first stage is catalyzed by the nonaketide synthase mlcA, which belongs to type I polyketide synthases and catalyzes the iterative nine-step formation of the polyketide. This PKS stage is completed by the action of dehydrogenase mlcG, which catalyzes the NADPH-dependent reduction of the unsaturated tetra-, penta- and heptaketide intermediates that arise during the mlcA-mediated biosynthesis of the nonaketide chain and leads to dihydro-ML-236C carboxylate. Covalently bound dihydro-ML-236C carboxylate is released from mlcA by the mlcF esterase. Conversion of dihydro-ML-236C carboxylate into ML-236A carboxylate is subsequently performed with the participation of molecular oxygen and P450 monoogygenase mlcC. Finally, mlcH performs the conversion of ML-236A carboxylate to ML-236B/compactin carboxylate through the addition of the side-chain diketide moiety produced by the diketide synthase mlcB. This Penicillium citrinum protein is Compactin nonaketide synthase, polyketide synthase component.